Here is a 122-residue protein sequence, read N- to C-terminus: Small ribosomal subunit protein uS13 (122 aa).

Positions Arg-99 to Lys-122 are disordered.

It belongs to the universal ribosomal protein uS13 family. In terms of assembly, part of the 30S ribosomal subunit. Forms a loose heterodimer with protein S19. Forms two bridges to the 50S subunit in the 70S ribosome.

Its function is as follows. Located at the top of the head of the 30S subunit, it contacts several helices of the 16S rRNA. In the 70S ribosome it contacts the 23S rRNA (bridge B1a) and protein L5 of the 50S subunit (bridge B1b), connecting the 2 subunits; these bridges are implicated in subunit movement. Contacts the tRNAs in the A and P-sites. The protein is Small ribosomal subunit protein uS13 of Rhodopseudomonas palustris (strain BisB5).